The chain runs to 315 residues: DNA-directed RNA polymerase subunit alpha (315 aa).

Residues 1–228 (MLEIEKPIIE…EHFKLFMSLT (228 aa)) are alpha N-terminal domain (alpha-NTD). The interval 245–315 (KEKVLEMTVE…LGLALKLTEE (71 aa)) is alpha C-terminal domain (alpha-CTD).

The protein belongs to the RNA polymerase alpha chain family. Homodimer. The RNAP catalytic core consists of 2 alpha, 1 beta, 1 beta' and 1 omega subunit. When a sigma factor is associated with the core the holoenzyme is formed, which can initiate transcription.

It carries out the reaction RNA(n) + a ribonucleoside 5'-triphosphate = RNA(n+1) + diphosphate. DNA-dependent RNA polymerase catalyzes the transcription of DNA into RNA using the four ribonucleoside triphosphates as substrates. This chain is DNA-directed RNA polymerase subunit alpha, found in Clostridium beijerinckii (strain ATCC 51743 / NCIMB 8052) (Clostridium acetobutylicum).